Consider the following 122-residue polypeptide: MIQQESRLRVADNTGAKEILCIRVLGGSSRRYAGIGDVIVATVKDAIPGGNVKRGDVVKAVVVRTVKERRRPDGSYIKFDENAAVLIKADNDPRGTRIFGPVGRELRDKKFMKIVSLAPEVL.

The protein belongs to the universal ribosomal protein uL14 family. As to quaternary structure, part of the 50S ribosomal subunit. Forms a cluster with proteins L3 and L19. In the 70S ribosome, L14 and L19 interact and together make contacts with the 16S rRNA in bridges B5 and B8.

Functionally, binds to 23S rRNA. Forms part of two intersubunit bridges in the 70S ribosome. In Nocardia farcinica (strain IFM 10152), this protein is Large ribosomal subunit protein uL14.